A 294-amino-acid chain; its full sequence is Retinoic acid receptor responder protein 1 (294 aa).

The Lumenal segment spans residues 1–20 (MQPRRQRLPAPWSGPRGPRP). Residues 21 to 42 (TAPLLALLLLLAPVAAPAGSGD) form a helical; Signal-anchor for type III membrane protein membrane-spanning segment. 2 Cystatin LXN-type domains span residues 38-153 (AGSG…EKKK) and 173-276 (EIVS…TPEE). Residue serine 40 is glycosylated (O-linked (Xyl...) (chondroitin sulfate) serine). At 43-294 (PDDPGQPQDA…AVVPTELSNF (252 aa)) the chain is on the cytoplasmic side. Residues 273-294 (TPEEASGTEEGSAVVPTELSNF) are disordered.

The protein belongs to the protease inhibitor I47 (latexin) family. In terms of assembly, interacts with AGBL2, KIF11 and MAPRE1. Post-translationally, not N-glycosylated. O-glycosylated; contains chondroitin sulfate. In terms of tissue distribution, detected in urine (at protein level).

It is found in the membrane. The protein resides in the secreted. In terms of biological role, inhibitor of the cytoplasmic carboxypeptidase AGBL2, may regulate the alpha-tubulin tyrosination cycle. This is Retinoic acid receptor responder protein 1 (RARRES1) from Homo sapiens (Human).